Consider the following 410-residue polypeptide: Multifunctional CCA protein (410 aa).

ATP is bound by residues glycine 8 and arginine 11. 2 residues coordinate CTP: glycine 8 and arginine 11. Positions 21 and 23 each coordinate Mg(2+). Positions 91, 137, and 140 each coordinate ATP. Arginine 91, arginine 137, and arginine 140 together coordinate CTP. One can recognise an HD domain in the interval 228-329 (TGIHSLMTLR…VKLLEQVDAF (102 aa)).

The protein belongs to the tRNA nucleotidyltransferase/poly(A) polymerase family. Bacterial CCA-adding enzyme type 1 subfamily. In terms of assembly, monomer. Can also form homodimers and oligomers. It depends on Mg(2+) as a cofactor. Ni(2+) is required as a cofactor.

The catalysed reaction is a tRNA precursor + 2 CTP + ATP = a tRNA with a 3' CCA end + 3 diphosphate. The enzyme catalyses a tRNA with a 3' CCA end + 2 CTP + ATP = a tRNA with a 3' CCACCA end + 3 diphosphate. Its function is as follows. Catalyzes the addition and repair of the essential 3'-terminal CCA sequence in tRNAs without using a nucleic acid template. Adds these three nucleotides in the order of C, C, and A to the tRNA nucleotide-73, using CTP and ATP as substrates and producing inorganic pyrophosphate. tRNA 3'-terminal CCA addition is required both for tRNA processing and repair. Also involved in tRNA surveillance by mediating tandem CCA addition to generate a CCACCA at the 3' terminus of unstable tRNAs. While stable tRNAs receive only 3'-terminal CCA, unstable tRNAs are marked with CCACCA and rapidly degraded. The sequence is that of Multifunctional CCA protein from Legionella pneumophila subsp. pneumophila (strain Philadelphia 1 / ATCC 33152 / DSM 7513).